A 203-amino-acid polypeptide reads, in one-letter code: tRNA (cytidine(56)-2'-O)-methyltransferase (203 aa).

S-adenosyl-L-methionine is bound by residues L80, 109 to 113 (GAEKV), and 127 to 134 (IGNQPHSE). The interval 178 to 203 (AEQDKAEGKATPGKNWENSGFTGDNP) is disordered. Over residues 193–203 (WENSGFTGDNP) the composition is skewed to polar residues.

It belongs to the aTrm56 family. In terms of assembly, homodimer.

The protein localises to the cytoplasm. It catalyses the reaction cytidine(56) in tRNA + S-adenosyl-L-methionine = 2'-O-methylcytidine(56) in tRNA + S-adenosyl-L-homocysteine + H(+). Specifically catalyzes the AdoMet-dependent 2'-O-ribose methylation of cytidine at position 56 in tRNAs. The chain is tRNA (cytidine(56)-2'-O)-methyltransferase from Pyrococcus horikoshii (strain ATCC 700860 / DSM 12428 / JCM 9974 / NBRC 100139 / OT-3).